The primary structure comprises 427 residues: Adenylosuccinate synthetase (427 aa).

Residues 12-18 (GDEGKGK) and 40-42 (GHT) contribute to the GTP site. Asp13 acts as the Proton acceptor in catalysis. 2 residues coordinate Mg(2+): Asp13 and Gly40. IMP is bound by residues 13–16 (DEGK), 38–41 (NAGH), Thr128, Arg142, Gln223, Thr238, and Arg302. The active-site Proton donor is His41. A substrate-binding site is contributed by 298–304 (TTTGRPR). GTP contacts are provided by residues Arg304, 330 to 332 (KLD), and 412 to 414 (SVG).

It belongs to the adenylosuccinate synthetase family. As to quaternary structure, homodimer. Mg(2+) is required as a cofactor.

It localises to the cytoplasm. It catalyses the reaction IMP + L-aspartate + GTP = N(6)-(1,2-dicarboxyethyl)-AMP + GDP + phosphate + 2 H(+). The protein operates within purine metabolism; AMP biosynthesis via de novo pathway; AMP from IMP: step 1/2. Its function is as follows. Plays an important role in the de novo pathway of purine nucleotide biosynthesis. Catalyzes the first committed step in the biosynthesis of AMP from IMP. In Carboxydothermus hydrogenoformans (strain ATCC BAA-161 / DSM 6008 / Z-2901), this protein is Adenylosuccinate synthetase.